The following is a 350-amino-acid chain: UPF0284 protein MJ1598 (350 aa).

The protein belongs to the UPF0284 family.

This is UPF0284 protein MJ1598 from Methanocaldococcus jannaschii (strain ATCC 43067 / DSM 2661 / JAL-1 / JCM 10045 / NBRC 100440) (Methanococcus jannaschii).